The primary structure comprises 844 residues: Fe(2+) transport protein A/Fe(2+) transporter FeoB fusion protein (844 aa).

The feoA stretch occupies residues 1 to 73 (MRLSELHTGD…EDAAKIEVEL (73 aa)). The interval 74–844 (ISSNATSSPA…LIYRIGILFF (771 aa)) is feoB. The span at 79–106 (TSSPASNDIGEQSANPDSNESIPTNPTE) shows a compositional bias: polar residues. A disordered region spans residues 79 to 110 (TSSPASNDIGEQSANPDSNESIPTNPTEDISA). One can recognise a FeoB-type G domain in the interval 126–289 (VIRVALIGNP…FDTLISIHEG (164 aa)). GTP contacts are provided by residues 133–140 (GNPNCGKT), 158–162 (GVTVE), 179–182 (DLPG), 240–243 (NMFD), and 269–271 (VGR). The next 8 helical transmembrane spans lie at 418–438 (VLGFPLFLLFMFIMFEATFVL), 475–495 (IGGVGGVIVFLPNILILYFFI), 520–540 (LHGKSFIPLIMGFGCNVPAIM), 559–579 (PLMSCSARLPVYLLLAGAFFP), 581–601 (SAGLVLFGLYFLGILLAVLLA), 646–666 (MGSIILLASIVIWFLSYYPRY), 786–806 (IIALALMAFVLIYFPCIATVV), and 817–837 (WAVFSIIYSCSLAWIVSFLIY).

This sequence in the N-terminal section; belongs to the FeoA family. The protein in the C-terminal section; belongs to the TRAFAC class TrmE-Era-EngA-EngB-Septin-like GTPase superfamily. FeoB GTPase (TC 9.A.8) family.

The protein resides in the cell inner membrane. Its function is as follows. Probable transporter of a GTP-driven Fe(2+) uptake system. This chain is Fe(2+) transport protein A/Fe(2+) transporter FeoB fusion protein, found in Porphyromonas gingivalis (strain ATCC BAA-308 / W83).